The sequence spans 371 residues: Alanine dehydrogenase (371 aa).

Residues Arg15 and Lys75 each coordinate substrate. Residue His96 is the Proton donor/acceptor of the active site. NAD(+)-binding positions include Ser134, 178-179 (TA), Asp198, Lys203, Ser220, 239-240 (VL), 267-270 (IAID), Arg279, and 298-301 (VANM). The Proton donor/acceptor role is filled by Asp270. Positions 323 and 327 each coordinate Mg(2+).

The protein belongs to the AlaDH/PNT family. Homohexamer. Trimer of dimers. Mg(2+) serves as cofactor.

It localises to the secreted. The enzyme catalyses L-alanine + NAD(+) + H2O = pyruvate + NH4(+) + NADH + H(+). It participates in amino-acid degradation; L-alanine degradation via dehydrogenase pathway; NH(3) and pyruvate from L-alanine: step 1/1. With respect to regulation, inhibited by CuSO(4) and ZnCl(2). Catalyzes the reversible reductive amination of pyruvate to L-alanine. However, since the physiological environment of M.tuberculosis has a neutral pH, it can be assumed that the enzyme catalyzes exclusively the formation of L-alanine. May play a role in cell wall synthesis as L-alanine is an important constituent of the peptidoglycan layer. This chain is Alanine dehydrogenase (ald), found in Mycobacterium tuberculosis (strain ATCC 25618 / H37Rv).